Here is a 233-residue protein sequence, read N- to C-terminus: Lysoplasmalogenase TMEM86B (233 aa).

Over 1–30 (MPCCDPYPWIGLNVGRLSSFPLLKYPQVRR) the chain is Cytoplasmic. The helical transmembrane segment at 31 to 47 (WLAPFIVACSLYFLLWI) threads the bilayer. The Extracellular segment spans residues 48 to 53 (PEDQPS). Residues 54–75 (WVSALVKCQPILCLVLFLWAVA) form a helical membrane-spanning segment. Topologically, residues 76-81 (PGGSYT) are cytoplasmic. The chain crosses the membrane as a helical span at residues 82–100 (WLLQGALTCSAVGDACLIW). The Extracellular segment spans residues 101–106 (PEAFFY). A helical membrane pass occupies residues 107 to 124 (GMAVFSVAHLLYLWAFGL). Residues 125-130 (SPLQPG) are Cytoplasmic-facing. The helical transmembrane segment at 131–147 (LLLCTTLASLTYYSFLL) threads the bilayer. Over 148 to 153 (LHLEPN) the chain is Extracellular. The helical transmembrane segment at 154–170 (MVLPVAAYGLILNTMLW) threads the bilayer. Residues 171–178 (RGLVLGRS) are Cytoplasmic-facing. A helical membrane pass occupies residues 179 to 195 (AGWGAVLFIFSDGVLAW). Topologically, residues 196–206 (DTFVYTLPFAR) are extracellular. A helical transmembrane segment spans residues 207–225 (LVTMSTYYAAQLLLTLSAL). Topologically, residues 226-233 (RSPGLKTH) are cytoplasmic.

This sequence belongs to the TMEM86 family. Homodimer.

Its subcellular location is the endoplasmic reticulum membrane. It is found in the cytoplasm. The catalysed reaction is a 1-O-(1Z-alkenyl)-sn-glycero-3-phosphocholine + H2O = a 2,3-saturated aldehyde + sn-glycerol 3-phosphocholine. The enzyme catalyses a 1-O-(1Z-alkenyl)-sn-glycero-3-phosphoethanolamine + H2O = a 2,3-saturated aldehyde + sn-glycero-3-phosphoethanolamine. Its activity is regulated as follows. Competitively inhibited by lysophosphatidic acid. Functionally, catalyzes the hydrolysis of the vinyl ether bond of choline or ethanolamine lysoplasmalogens, forming fatty aldehyde and glycerophosphocholine or glycerophosphoethanolamine, respectively and is specific for the sn-2-deacylated (lyso) form of plasmalogen. The chain is Lysoplasmalogenase TMEM86B (Tmem86b) from Rattus norvegicus (Rat).